A 472-amino-acid chain; its full sequence is uncharacterized protein (472 aa).

14 helical membrane-spanning segments follow: residues 14–34, 53–73, 80–100, 113–133, 142–162, 169–189, 202–222, 227–247, 263–283, 302–322, 333–353, 359–379, 405–427, and 437–457; these read VIVG…TLLI, WLTT…AFLI, ALLI…AFAP, AAGA…IFPI, MVGL…GWAV, SLFY…SILM, ILSV…FSSV, WSSS…LLFI, FTFG…ALLI, FDTG…SPII, GLAI…MQLT, AWIV…MMPV, VGGS…HAGT, and GMNA…LLSF.

The protein belongs to the major facilitator superfamily. EmrB family.

The protein resides in the cell membrane. This is an uncharacterized protein from Bacillus subtilis (strain 168).